Here is a 439-residue protein sequence, read N- to C-terminus: Ribosomal protein uS12 methylthiotransferase RimO (439 aa).

Residues 7 to 119 enclose the MTTase N-terminal domain; it reads KQLCLISLGC…IDIMIAKKQN (113 aa). [4Fe-4S] cluster is bound by residues cysteine 16, cysteine 50, cysteine 82, cysteine 151, cysteine 155, and cysteine 158. The region spanning 137 to 368 is the Radical SAM core domain; sequence TGSSVHAYVK…ALKHQNHSFK (232 aa).

This sequence belongs to the methylthiotransferase family. RimO subfamily. [4Fe-4S] cluster serves as cofactor.

The protein resides in the cytoplasm. The enzyme catalyses L-aspartate(89)-[ribosomal protein uS12]-hydrogen + (sulfur carrier)-SH + AH2 + 2 S-adenosyl-L-methionine = 3-methylsulfanyl-L-aspartate(89)-[ribosomal protein uS12]-hydrogen + (sulfur carrier)-H + 5'-deoxyadenosine + L-methionine + A + S-adenosyl-L-homocysteine + 2 H(+). Its function is as follows. Catalyzes the methylthiolation of an aspartic acid residue of ribosomal protein uS12. The protein is Ribosomal protein uS12 methylthiotransferase RimO of Helicobacter pylori (strain ATCC 700392 / 26695) (Campylobacter pylori).